Here is a 347-residue protein sequence, read N- to C-terminus: Cytoplasmic tRNA 2-thiolation protein 1 (347 aa).

S200 bears the Phosphoserine mark. Residues 315-347 (LAIGKGRRGLDEEGPPREPQPSRPLTSEPVPDF) form a disordered region.

It belongs to the TtcA family. CTU1/NCS6/ATPBD3 subfamily. In terms of assembly, component of a complex at least composed of URM1, CTU2/NCS2 and CTU1/ATPBD3. May form a heterodimer with CTU2/NCS2.

The protein localises to the cytoplasm. It participates in tRNA modification; 5-methoxycarbonylmethyl-2-thiouridine-tRNA biosynthesis. Plays a central role in 2-thiolation of mcm(5)S(2)U at tRNA wobble positions of tRNA(Lys), tRNA(Glu) and tRNA(Gln). Directly binds tRNAs and probably acts by catalyzing adenylation of tRNAs, an intermediate required for 2-thiolation. It is unclear whether it acts as a sulfurtransferase that transfers sulfur from thiocarboxylated URM1 onto the uridine of tRNAs at wobble position. The chain is Cytoplasmic tRNA 2-thiolation protein 1 from Bos taurus (Bovine).